A 281-amino-acid polypeptide reads, in one-letter code: uncharacterized protein (281 aa).

The next 8 membrane-spanning stretches (helical) occupy residues 30-50 (AIVASLLVSLACGLIGSFIVI), 54-74 (VFISGGVAHAAYGGIGLGYYF), 76-96 (FNPLWGAFVFSLVMALAMGWV), 106-126 (TLIGVMWALGMAIGIMLIDLT), 153-173 (AGLDMLIIILLFLLYKEFLAI), 198-218 (IALTVVMVMQLVGLIMVIALL), 235-255 (MMAVASGLGMVFCGVGLALSY), and 259-279 (LSSGATIILVASIAYLISLAF).

It belongs to the ABC-3 integral membrane protein family.

It is found in the cell membrane. This is an uncharacterized protein from Synechocystis sp. (strain ATCC 27184 / PCC 6803 / Kazusa).